The following is a 73-amino-acid chain: Photosystem I reaction center subunit IV (73 aa).

It belongs to the PsaE family.

It localises to the cellular thylakoid membrane. Functionally, stabilizes the interaction between PsaC and the PSI core, assists the docking of the ferredoxin to PSI and interacts with ferredoxin-NADP oxidoreductase. This chain is Photosystem I reaction center subunit IV, found in Synechococcus sp. (strain JA-3-3Ab) (Cyanobacteria bacterium Yellowstone A-Prime).